A 360-amino-acid chain; its full sequence is DNA replication and repair protein RecF (360 aa).

33 to 40 is an ATP binding site; it reads GENGSGKT.

This sequence belongs to the RecF family.

Its subcellular location is the cytoplasm. In terms of biological role, the RecF protein is involved in DNA metabolism; it is required for DNA replication and normal SOS inducibility. RecF binds preferentially to single-stranded, linear DNA. It also seems to bind ATP. This chain is DNA replication and repair protein RecF, found in Rickettsia africae (strain ESF-5).